The chain runs to 84 residues: Small ribosomal subunit protein bS20 (84 aa).

Residues 1–28 (MPNIKSAIKRVKTADTRNSRNASQRSAM) are disordered.

Belongs to the bacterial ribosomal protein bS20 family.

Binds directly to 16S ribosomal RNA. The polypeptide is Small ribosomal subunit protein bS20 (Listeria welshimeri serovar 6b (strain ATCC 35897 / DSM 20650 / CCUG 15529 / CIP 8149 / NCTC 11857 / SLCC 5334 / V8)).